The chain runs to 292 residues: Manganese transport system membrane protein MntC (292 aa).

A run of 8 helical transmembrane segments spans residues 20–40, 58–78, 96–116, 137–157, 168–188, 190–210, 226–246, and 249–269; these read ALTAAILVGIICGVIGCFIIL, VVIAYMIGASFFIGAVITGVI, SAIGILFTAAFALGIVLITGM, TDLWVTLGIGLFVLLIIILFY, VMAQATGIPVQMIHYLLMLLL, LVTVAALQTVGIVLVVAMLIT, LCLAAMFGVISAIAGIYFSVI, and VASGASIVLVASTLFALAFFF.

It belongs to the ABC-3 integral membrane protein family.

It localises to the cell membrane. In terms of biological role, this protein is probably a component of a manganese permease, a binding protein-dependent, ATP-driven transport system. This chain is Manganese transport system membrane protein MntC (mntC), found in Halalkalibacterium halodurans (strain ATCC BAA-125 / DSM 18197 / FERM 7344 / JCM 9153 / C-125) (Bacillus halodurans).